The following is a 392-amino-acid chain: Formate-dependent phosphoribosylglycinamide formyltransferase (392 aa).

N(1)-(5-phospho-beta-D-ribosyl)glycinamide contacts are provided by residues E22–L23 and E82. Residues R114, K155, S160–Q165, E195–V198, and E203 each bind ATP. The ATP-grasp domain maps to R119–L308. Mg(2+)-binding residues include E267 and E279. N(1)-(5-phospho-beta-D-ribosyl)glycinamide-binding positions include D286, K355, and R362–R363.

It belongs to the PurK/PurT family. As to quaternary structure, homodimer.

The enzyme catalyses N(1)-(5-phospho-beta-D-ribosyl)glycinamide + formate + ATP = N(2)-formyl-N(1)-(5-phospho-beta-D-ribosyl)glycinamide + ADP + phosphate + H(+). It participates in purine metabolism; IMP biosynthesis via de novo pathway; N(2)-formyl-N(1)-(5-phospho-D-ribosyl)glycinamide from N(1)-(5-phospho-D-ribosyl)glycinamide (formate route): step 1/1. Involved in the de novo purine biosynthesis. Catalyzes the transfer of formate to 5-phospho-ribosyl-glycinamide (GAR), producing 5-phospho-ribosyl-N-formylglycinamide (FGAR). Formate is provided by PurU via hydrolysis of 10-formyl-tetrahydrofolate. This chain is Formate-dependent phosphoribosylglycinamide formyltransferase, found in Salmonella choleraesuis (strain SC-B67).